Consider the following 837-residue polypeptide: GRIP1-associated protein 1 (837 aa).

Ala2 carries the N-acetylalanine modification. A coiled-coil region spans residues 4 to 158 (ALSEEEFQRM…ALQERYGKEA (155 aa)). Disordered regions lie at residues 161–180 (PSAVSEGQGDPPGDVLPISL), 555–577 (KGKEEELQNVRDQLQQAQEERDG), 647–666 (SEMNSPSRTQTGDSSSVSSF), and 677–702 (SSAIPARSLSSSPQAQPPRPAELSDE). Residues 204 to 637 (EQLQGLESSK…LQEILTNSKS (434 aa)) adopt a coiled-coil conformation. The span at 648 to 666 (EMNSPSRTQTGDSSSVSSF) shows a compositional bias: polar residues. A phosphoserine mark is found at Ser651, Ser662, Ser664, Ser665, Ser684, Ser686, Ser687, and Ser688. Over residues 678–690 (SAIPARSLSSSPQ) the composition is skewed to low complexity. Coiled coils occupy residues 697–731 (AELSDEEVAELFQRLAETQQEKWMLEEKVKHLEVS) and 781–810 (DENLREMNKKLQNMLEEQLTKNMHLHKDME). Ser826 carries the phosphoserine modification.

As to quaternary structure, interacts with GRIP1, GRIP2 and AMPA receptors. Interacts (via C-terminus) with MAPK8/JNK1 and with MAP3K1/MEKK1; the interaction promotes MAP3K1-mediated phosphorylation of MAPK8. Interacts (via N-terminus) with RAB4A (in GTP-bound form). Interacts (via C-terminus) with STX12. In terms of processing, proteolytically cleaved by caspase-3. A minor C-terminal proteolytic fragment of 30 kDa is produced. Proteolytic cleavage is required for JNK signaling activation. As to expression, expressed in the central nervous system; especially in neurons.

Its subcellular location is the early endosome membrane. It is found in the recycling endosome membrane. The protein localises to the cell projection. It localises to the axon. The protein resides in the dendrite. Its subcellular location is the synapse. In terms of biological role, regulates the endosomal recycling back to the neuronal plasma membrane, possibly by connecting early and late recycling endosomal domains and promoting segregation of recycling endosomes from early endosomal membranes. Involved in the localization of recycling endosomes to dendritic spines, thereby playing a role in the maintenance of dendritic spine morphology. Required for the activity-induced AMPA receptor recycling to dendrite membranes and for long-term potentiation and synaptic plasticity. Its function is as follows. Functions as a scaffold protein in neurons to facilitate MAP3K1/MEKK1-mediated activation of the JNK1 kinase by phosphorylation, possibly by bringing MAP3K1/MEKK1 and JNK1 in close proximity. This is GRIP1-associated protein 1 (Gripap1) from Rattus norvegicus (Rat).